Reading from the N-terminus, the 1662-residue chain is MATDGASCEPDLSRAPEDAAGAAAEAAKKEFDVDTLSKSELRMLLSVMEGELEARDLVIEALRARRKEVFIQERYGRFNLNDPFLALQRDYEAGAGDKEKKPVCTNPLSILEAVMAHCKKMQERMSAQLAAAESRQKKLEMEKLQLQALEQEHKKLAARLEEERGKNKQVVLMLVKECKQLSGKVIEEAQKLEDVMAKLEEEKKKTNELEEELSAEKRRSTEMEAQMEKQLSEFDTEREQLRAKLNREEAHTTDLKEEIDKMKKMIEQLKRGSDSKPSLSLPRKTKDRRLVSISVGTEGTVTRSVACQTDLVTESADHVKKLPLTMPVKPSTGSPLVSANAKGSVCTSATMARPGIDRQASHSDLIGSSVPAFPPPSANRIEENGPSTDSTPDPTSSTPPLPSNAAPPTTQTPGIAPQNSQAPPMHSLHSPCANASLHPGLNPRIQAARFRFQGNANDPDQNGNTTQSPPSRDMSPTSRDNLVAKQLARNTVTQALSRFTSPQAGAPSRPGAPPTGDVGTHPPVGRTSLKTHGVARVDRGNPPPIPPKKPGLSQTPSPPHPQLKVIIDSSRASNTGAKVDNKTVASPPSSLPQGNRVTNEDNLPKSSSPQLPPKPSIDLTVAPAGCTVSALATSQVGAWPAATPGLNQPACSDSSLVIPTTIAFCSSINPVSASSCRPGASDSLLVTASGWSPSLTPLLMSGGPAPLAGRPTLLQQAAAQGNVTLLSMLLNEEGLDINYSCEDGHSALYSAAKNGHTDCVRLLLSAEAQINAADKNGFTPLCAAAAQGHFECVELLIAYDANINHAADGGQTPLYLACKNENKECIKLLLEAGTNRSVKTTDGWTPVHAAVDTGNVDSLKLLMYHRIPACGNSFNEEESESGVFDLDGGEESPEGIFKPVVPADLINHANREGWTAAHIAASKGFKNCLEILCRHGGLEPERRDKCNRTVHDVATDDCKHLLENLNALKIPLRISVGEIEPSNCGSDDLECENTICALNIRKQTSWDDFSKAVSQALTNHFQAISSDGWWSLEDVTCNNTTDSNIGLSAASIRSITLGNVPWSVGQSFTQSPWDFMRKNKAEHITVLLSGPQEGCLSSVTYASMIPLQMMQNYLRLVEQYHNVIFHGPEGSLQDYIVHQLALCLKHRQMAAGFSCEIVRAEIDAGFSKEQLLDLFISSACLIPVKQSPSKKKIIIILENLEKSSLSELLRDFLAPLENRSTESPCTFQKGNGMSECYYFHENCFLMGTIAKACLQGSDLLVQQHFRWVQLRWDGEPMQGLLQRFLRRKVVNKFKGQAPSPCDPVCKIVDWALSVWRQLNSCLARLGTPEALLGPKYFLSCPVVPGHAQVTVKWMSKLWNGVIAPRVQEAILSRASVKRQPGFGQTTAKRHPSQGQQAVVKAALSILLNKAVLHGCPLPRAELDQHTADFKGGSFPLSIVSSYNSCNKKKGESGAWRKVNTSPRRKSGRFSLPTWNKPDLSTEGIKNKTISQLNYNRNVSLSKQKSLENDLSLTLNLDQRLSLGSDDEADLVKELQSMCSSKSESDISKIADSRDDLRMFDSSGNNPILSATINNLRMPVSQKEVSPLSSHQTTECSNSKSKTELGVSRVKSFLPVPRSKVTLCSQNTKRSSSSSNTRQIEINNNSKENWNLHKNEHLDKPNK.

Disordered stretches follow at residues 1 to 23 (MATDGASCEPDLSRAPEDAAGAA), 203 to 222 (KKKTNELEEELSAEKRRSTE), 361 to 440 (SHSD…LHPG), 454 to 479 (GNANDPDQNGNTTQSPPSRDMSPTSR), and 498 to 618 (RFTS…PSID). A coiled-coil region spans residues 119 to 276 (KKMQERMSAQ…EQLKRGSDSK (158 aa)). The span at 386–396 (PSTDSTPDPTS) shows a compositional bias: low complexity. The segment covering 411–422 (QTPGIAPQNSQA) has biased composition (polar residues). Arg498 bears the Asymmetric dimethylarginine mark. Over residues 583–597 (TVASPPSSLPQGNRV) the composition is skewed to polar residues. ANK repeat units lie at residues 709 to 739 (GRPTLLQQAAAQGNVTLLSMLLNEEGLDINY), 743 to 772 (DGHSALYSAAKNGHTDCVRLLLSAEAQINA), 776 to 805 (NGFTPLCAAAAQGHFECVELLIAYDANINH), 809 to 838 (GGQTPLYLACKNENKECIKLLLEAGTNRSV), 842 to 871 (DGWTPVHAAVDTGNVDSLKLLMYHRIPACG), and 912 to 942 (EGWTAAHIAASKGFKNCLEILCRHGGLEPER). Positions 1450-1474 (GESGAWRKVNTSPRRKSGRFSLPTW) are disordered. Ser1524 is modified (phosphoserine). Disordered regions lie at residues 1580–1602 (SQKEVSPLSSHQTTECSNSKSKT) and 1618–1662 (SKVT…KPNK). The segment covering 1582-1599 (KEVSPLSSHQTTECSNSK) has biased composition (polar residues). The segment covering 1624–1638 (SQNTKRSSSSSNTRQ) has biased composition (low complexity). Polar residues predominate over residues 1639 to 1648 (IEINNNSKEN). Over residues 1649–1662 (WNLHKNEHLDKPNK) the composition is skewed to basic and acidic residues.

Interacts with CTTN/cortactin SH3 domain. Interacts with STRN, STRN4/zinedin and MOB4/phocein; this interactions mediate the association with the STRIPAK core complex and may regulate dendritic spine distribution of the STRIPAK complex in hippocampal neurons. Activation of glutamate receptors weakens the interaction with STRN and STRN4.

The protein resides in the cytoplasm. The protein localises to the cell cortex. Its subcellular location is the cell projection. It is found in the dendritic spine. Its function is as follows. Regulates the dendritic spine distribution of CTTN/cortactin in hippocampal neurons, and thus controls dendritic spinogenesis and dendritic spine maintenance. Associates with the striatin-interacting phosphatase and kinase (STRIPAK) core complex to regulate dendritic spine distribution of the STRIPAK complex in hippocampal neurons. This Chlorocebus aethiops (Green monkey) protein is Cortactin-binding protein 2 (CTTNBP2).